The sequence spans 166 residues: Macrocypin-5a (166 aa).

The segment at 20–39 (NIPGGMYASSKDGKDEPVTA) is disordered.

The protein belongs to the protease inhibitor I85 family.

Functionally, inhibits papain and cysteine cathepsin endopeptidases, and also inhibits cathepsins B and H, which exhibit both exopeptidase and endopeptidase activities. This is Macrocypin-5a from Macrolepiota procera (Parasol mushroom).